A 421-amino-acid chain; its full sequence is MKMAKKCSVFMLCAAVSLSLAACGPKESSSAKSSSKGSELVVWEDKEKSNGIKDAVAAFEKEHDVKVKVVEKPYAKQIEDLRMDGPAGTGPDVLTMPGDQIGTAVTEGLLKELHVKKDVQSLYTDASIQSQMVDQKLYGLPKAVETTVLFYNKDLITEKELPKTLEEWYDYSKKTADGSKFGFLALFDQIYYAESVMSGYGGYIFGKAKDGSYNPSDIGINNEGAVKGAALIQKFYKDGLFPAGIIGEQGINVLESLFTEGKAAAIISGPWNVEAFSNAGINYGITKLPKLENGKNMSSFIGVKSYNVSAFSKNEELAQELAVFLANEKNSKTRYEETKEVPAVKSLANDPAIMKSEAARAVTEQSRFSEPTPNIPEMNEIWTPADSALQTVATGKADPKQALDQAAETAKGQIKAKHSGK.

The first 22 residues, 1-22, serve as a signal peptide directing secretion; sequence MKMAKKCSVFMLCAAVSLSLAA. Cys-23 carries the N-palmitoyl cysteine lipid modification. The S-diacylglycerol cysteine moiety is linked to residue Cys-23. Residues 393-421 are disordered; that stretch reads ATGKADPKQALDQAAETAKGQIKAKHSGK.

Belongs to the bacterial solute-binding protein 1 family. The complex is composed of two ATP-binding proteins (MsmX), two transmembrane proteins (GanP and GanQ) and a solute-binding protein (GanS).

Its subcellular location is the cell membrane. Functionally, involved in galactan degradation. Part of the ABC transporter complex GanPQS involved in the uptake of galactooligosaccharides. Binds mainly galactotetraose and galactotriose. This chain is Galactooligosaccharide-binding protein, found in Bacillus subtilis (strain 168).